The following is a 154-amino-acid chain: Cyanate hydratase (154 aa).

Active-site residues include Arg100, Glu103, and Ser126.

It belongs to the cyanase family.

It catalyses the reaction cyanate + hydrogencarbonate + 3 H(+) = NH4(+) + 2 CO2. In terms of biological role, catalyzes the reaction of cyanate with bicarbonate to produce ammonia and carbon dioxide. This Aspergillus fumigatus (strain ATCC MYA-4609 / CBS 101355 / FGSC A1100 / Af293) (Neosartorya fumigata) protein is Cyanate hydratase.